A 354-amino-acid polypeptide reads, in one-letter code: Putative Xaa-Pro aminopeptidase (354 aa).

Mn(2+) contacts are provided by Asp-213, Asp-224, His-290, Glu-319, and Glu-333.

It belongs to the peptidase M24B family. It depends on Mn(2+) as a cofactor.

It catalyses the reaction Release of any N-terminal amino acid, including proline, that is linked to proline, even from a dipeptide or tripeptide.. The sequence is that of Putative Xaa-Pro aminopeptidase (pepP) from Mycoplasma pneumoniae (strain ATCC 29342 / M129 / Subtype 1) (Mycoplasmoides pneumoniae).